Here is a 691-residue protein sequence, read N- to C-terminus: MARDFPLERVRNIGIAAHIDAGKTTTTERILFYSGVVHKIGEVHDGAAVTDWMAQERERGITITAAAISTSWQDHRINIIDTPGHVDFTIEVERSMRVLDGVIAVFCAVGGVQPQSETVWRQADRYSVPRMVFVNKMDRTGADFLKVNNQIKDRLKANALPIQLPIGAEGDLTGIIDLVANKAYLYKNDLGTDIQEAPIPSEMDDEAAEWRYKLMESVAENDEELIETFLETGELSEEQLKKGIREGVLKHGLVPVLCGSAFKNKGVQLVLDAVVDYLPAPVDVKPIQGVLPSGKEDVRPSDDNAPFSALAFKVMSDPYGKLTFVRMYSGVLSKGSYVMNSTKDAKERISRLVILKADEREEVDELRAGDLGAVLGLKNTTTGDTLCNTEDPIVLETLFIPEPVISVAVEPKTKGDMEKLSKALTALSEEDPTFRVSTDPETNQTVIAGMGELHLEILVDRMLREFKVEANIGAPQVSYRETIRSSSKGEGKYARQTGGKGQYGHVIIEMEPAEVGKGFEFVNKIVGGAVPKEYIGPASNGMKETCESGVLAGYPLIDVKVTLVDGSFHDVDSSEMAFKIAGSMAFKDGVKKCNPVLLEPMMKVEVESPDDFLGSVIGDLSSRRGQVEGQSVDDGLSKVQAKVPLAEMFGYATQLRSMTQGRGIFSMEFANYEEVPRNVAEAIITKNQGNS.

Residues 8-282 (ERVRNIGIAA…AVVDYLPAPV (275 aa)) enclose the tr-type G domain. Residues 17–24 (AHIDAGKT), 81–85 (DTPGH), and 135–138 (NKMD) each bind GTP.

This sequence belongs to the TRAFAC class translation factor GTPase superfamily. Classic translation factor GTPase family. EF-G/EF-2 subfamily.

It is found in the cytoplasm. In terms of biological role, catalyzes the GTP-dependent ribosomal translocation step during translation elongation. During this step, the ribosome changes from the pre-translocational (PRE) to the post-translocational (POST) state as the newly formed A-site-bound peptidyl-tRNA and P-site-bound deacylated tRNA move to the P and E sites, respectively. Catalyzes the coordinated movement of the two tRNA molecules, the mRNA and conformational changes in the ribosome. The protein is Elongation factor G of Prochlorococcus marinus (strain MIT 9312).